Reading from the N-terminus, the 649-residue chain is MHVTLPDGKQLDLQPGATALDAAKAIGPRLAQDALGATANGELTDLMTPLSDGASITLITKKNPGDAAPLFRHSLGHVMSQAVGEYYKAKGYGPDAIKRGVGPYIENGWYQDFDLPEPLKEEDLPEIEKIMRDIIGRGLDITRREISKDEALAQFPHDPYKAELIEGLPDDEPITFYSQGDYTDLCRGPHFPSTGKLPQSFKLMSTSGAYWRGNEKNPILQRIYGVAFATQKELDEYLFQLEEAKRRDHRKLGKELELFTIDPLVGKGLPLWLPNGTVLREELTNFMKEQQFQRGYQGVVTPNIGNLDLYRTSGHYPYYSESQFNPIQVDEEEYMLKPMNCPHHVRIYASKPRSYRDLPVRLAEFGTVYRYEQSGELNGLTRVRGFTQDDAHIFCRPDQLKREFLDVLDLTVLVLKTFGMTDVRFRVGVRDPESDKYVGDEQNWALAERQIIEAVEEVGLPYTIEPGDAAFYGPKLDFVVKDVLGREWQLGTIQVDYNLPERFDISYTGEDGQEHRPIMIHRAPFGSIERFTGILIEHYAGDFPLWLAPRQVMIIPIADRHNAYAEELREELHRAGLRAEVDDSSNRMQAKVRDAELHKIPVMLIVGDKEQEAREVSVRERTGEGTKERKGVKFDELKAELLERRKNRS.

Positions 1 to 60 (MHVTLPDGKQLDLQPGATALDAAKAIGPRLAQDALGATANGELTDLMTPLSDGASITLIT) constitute a TGS domain. The catalytic stretch occupies residues 248 to 544 (DHRKLGKELE…LIEHYAGDFP (297 aa)). Zn(2+)-binding residues include Cys341, His392, and His521.

The protein belongs to the class-II aminoacyl-tRNA synthetase family. Homodimer. Zn(2+) is required as a cofactor.

It localises to the cytoplasm. It carries out the reaction tRNA(Thr) + L-threonine + ATP = L-threonyl-tRNA(Thr) + AMP + diphosphate + H(+). In terms of biological role, catalyzes the attachment of threonine to tRNA(Thr) in a two-step reaction: L-threonine is first activated by ATP to form Thr-AMP and then transferred to the acceptor end of tRNA(Thr). Also edits incorrectly charged L-seryl-tRNA(Thr). This Deinococcus radiodurans (strain ATCC 13939 / DSM 20539 / JCM 16871 / CCUG 27074 / LMG 4051 / NBRC 15346 / NCIMB 9279 / VKM B-1422 / R1) protein is Threonine--tRNA ligase.